The primary structure comprises 237 residues: Protein GrpE (237 aa).

Disordered stretches follow at residues 1 to 52 (MSGD…RLQQ) and 200 to 237 (KVSM…EPGV). Residues 27 to 40 (ASMNSDEGQPSAQS) show a composition bias toward polar residues. A compositionally biased stretch (low complexity) spans 204 to 218 (GPGPQSGASPSSAQS).

It belongs to the GrpE family. Homodimer.

It is found in the cytoplasm. Its function is as follows. Participates actively in the response to hyperosmotic and heat shock by preventing the aggregation of stress-denatured proteins, in association with DnaK and GrpE. It is the nucleotide exchange factor for DnaK and may function as a thermosensor. Unfolded proteins bind initially to DnaJ; upon interaction with the DnaJ-bound protein, DnaK hydrolyzes its bound ATP, resulting in the formation of a stable complex. GrpE releases ADP from DnaK; ATP binding to DnaK triggers the release of the substrate protein, thus completing the reaction cycle. Several rounds of ATP-dependent interactions between DnaJ, DnaK and GrpE are required for fully efficient folding. In Prochlorococcus marinus (strain MIT 9303), this protein is Protein GrpE.